The sequence spans 163 residues: Large ribosomal subunit protein bL17 (163 aa).

Residues 127–163 are disordered; the sequence is VAKKATRTRRSKKSAEAAAPAAVEAPATEEPKAESAE. Residues 129 to 138 show a composition bias toward basic residues; sequence KKATRTRRSK. Over residues 142 to 154 the composition is skewed to low complexity; sequence EAAAPAAVEAPAT.

This sequence belongs to the bacterial ribosomal protein bL17 family. Part of the 50S ribosomal subunit. Contacts protein L32.

The sequence is that of Large ribosomal subunit protein bL17 from Bacteroides thetaiotaomicron (strain ATCC 29148 / DSM 2079 / JCM 5827 / CCUG 10774 / NCTC 10582 / VPI-5482 / E50).